A 233-amino-acid polypeptide reads, in one-letter code: tRNA pseudouridine synthase B (233 aa).

D48 functions as the Nucleophile in the catalytic mechanism.

The protein belongs to the pseudouridine synthase TruB family. Type 1 subfamily.

The catalysed reaction is uridine(55) in tRNA = pseudouridine(55) in tRNA. In terms of biological role, responsible for synthesis of pseudouridine from uracil-55 in the psi GC loop of transfer RNAs. This Bacteroides fragilis (strain ATCC 25285 / DSM 2151 / CCUG 4856 / JCM 11019 / LMG 10263 / NCTC 9343 / Onslow / VPI 2553 / EN-2) protein is tRNA pseudouridine synthase B.